We begin with the raw amino-acid sequence, 162 residues long: 2-C-methyl-D-erythritol 2,4-cyclodiphosphate synthase (162 aa).

Residues D8 and H10 each contribute to the a divalent metal cation site. Residues 8-10 and 34-35 each bind 4-CDP-2-C-methyl-D-erythritol 2-phosphate; these read DVH and HS. An a divalent metal cation-binding site is contributed by H42. 4-CDP-2-C-methyl-D-erythritol 2-phosphate contacts are provided by residues 56-58, 61-65, 132-135, F139, and K142; these read DIG, FPDND, and TTTE.

The protein belongs to the IspF family. In terms of assembly, homotrimer. A divalent metal cation serves as cofactor.

It carries out the reaction 4-CDP-2-C-methyl-D-erythritol 2-phosphate = 2-C-methyl-D-erythritol 2,4-cyclic diphosphate + CMP. Its pathway is isoprenoid biosynthesis; isopentenyl diphosphate biosynthesis via DXP pathway; isopentenyl diphosphate from 1-deoxy-D-xylulose 5-phosphate: step 4/6. Functionally, involved in the biosynthesis of isopentenyl diphosphate (IPP) and dimethylallyl diphosphate (DMAPP), two major building blocks of isoprenoid compounds. Catalyzes the conversion of 4-diphosphocytidyl-2-C-methyl-D-erythritol 2-phosphate (CDP-ME2P) to 2-C-methyl-D-erythritol 2,4-cyclodiphosphate (ME-CPP) with a corresponding release of cytidine 5-monophosphate (CMP). This is 2-C-methyl-D-erythritol 2,4-cyclodiphosphate synthase from Pelotomaculum thermopropionicum (strain DSM 13744 / JCM 10971 / SI).